A 393-amino-acid chain; its full sequence is MPGIRGPSEYSQEPPRHPSLKVNAKEPFNAEPPRSALVSSYVTPVDLFYKRNHGPIPIVDHLQSYSVTLTGLIQNPRKLFIKDIRSLPKYNVTATLQCAGNRRTAMSKVRNVRGVGWDVSAIGNAVWGGAKLADVLELVGIPKLTASTNLGARHVEFVSVDRCKEENGGPYKASITLSQATNPEADVLLAYEMNGETLNRDHGFPLRVVVPGVIGARSVKWLDSINVIAEESQGFFMQKDYKMFPPSVNWDNINWSSRRPQMDFPVQSAICSVEDVQMVKPGKVSIKGYAVSGGGRGIERVDISLDGGKNWVEASRTQEPGKQYISEHSSSDKWAWVLFEATIDVSQTTEVIAKAVDSAANVQPENVESVWNLRGVLNTSWHRVLLRLGHSNL.

The tract at residues 1-27 (MPGIRGPSEYSQEPPRHPSLKVNAKEP) is disordered. The segment at 10 to 242 (YSQEPPRHPS…QGFFMQKDYK (233 aa)) is moco domain. Residues 49-53 (YKRNH), Cys-98, 159-161 (SVD), His-202, Arg-207, and 218-220 (SVK) each bind Mo-molybdopterin. Residues 243–393 (MFPPSVNWDN…VLLRLGHSNL (151 aa)) form a homodimerization region. The Microbody targeting signal motif lies at 391-393 (SNL).

As to quaternary structure, predominantly monomer; also homodimer. Requires Mo-molybdopterin as cofactor.

It localises to the peroxisome. The catalysed reaction is sulfite + O2 + H2O = sulfate + H2O2. It participates in energy metabolism; sulfur metabolism. Its function is as follows. Probably involved in sulfite oxidative detoxification. This Arabidopsis thaliana (Mouse-ear cress) protein is Sulfite oxidase (SOX).